Consider the following 216-residue polypeptide: MSPNLNGPGGSDDSDRPDEPDDSDRPDESNSTGNPDTPDDRPNKTPDRPSDHPSSLLDQLRAILETLAEIEEDGHRQGHGRIDRGNAQIDYDYEVSFGLGPRSRRGKPSDEPRVEAPRTEGTDSQPEGEKSIHIETRETDDGERVVIADLPGVADDELDVTLDADESALELRTDEGIVGRVPLDQPDVEITDVRLRNQVLEIRLTRTNESNGSESK.

A disordered region spans residues 1-141 (MSPNLNGPGG…IHIETRETDD (141 aa)). A compositionally biased stretch (acidic residues) spans 15–25 (DRPDEPDDSDR). Composition is skewed to basic and acidic residues over residues 38–51 (PDDRPNKTPDRPSD), 73–84 (DGHRQGHGRIDR), and 107–141 (KPSDEPRVEAPRTEGTDSQPEGEKSIHIETRETDD).

This sequence belongs to the gas vesicle GvpH family. In terms of assembly, gvpF to GvpM interact with each other in vitro, and may form multi-subunit complex(es). Interacts with GvpC. Might interact with GvpA.

Its subcellular location is the gas vesicle. Its function is as follows. Proteins GvpF to GvpM might be involved in nucleating gas vesicle formation. A minor component of the gas vesicle. Gas vesicles are hollow, gas filled proteinaceous nanostructures found in some microorganisms. They allow positioning of halobacteria at the optimal depth for growth in the poorly aerated, shallow brine pools of their habitat. Functionally, expression of a 9.5 kb mc-vac DNA fragment containing 2 divergently transcribed regions (gvpD-gvpE-gvpF-gvpG-gvpH-gvpI-gvpJ-gvpK-gvpL-gvpM and gvpA-gvpC-gvpN-gvpO) allows H.volcanii to produce gas vesicles. In Haloferax mediterranei (strain ATCC 33500 / DSM 1411 / JCM 8866 / NBRC 14739 / NCIMB 2177 / R-4) (Halobacterium mediterranei), this protein is Gas vesicle protein H.